The primary structure comprises 435 residues: Serine--tRNA ligase (435 aa).

Residue 242–244 coordinates L-serine; the sequence is TAE. 273–275 serves as a coordination point for ATP; sequence RSE. E296 is an L-serine binding site. Residue 360 to 363 participates in ATP binding; that stretch reads EISS. S396 is a binding site for L-serine.

Belongs to the class-II aminoacyl-tRNA synthetase family. Type-1 seryl-tRNA synthetase subfamily. In terms of assembly, homodimer. The tRNA molecule binds across the dimer.

Its subcellular location is the cytoplasm. The catalysed reaction is tRNA(Ser) + L-serine + ATP = L-seryl-tRNA(Ser) + AMP + diphosphate + H(+). The enzyme catalyses tRNA(Sec) + L-serine + ATP = L-seryl-tRNA(Sec) + AMP + diphosphate + H(+). It participates in aminoacyl-tRNA biosynthesis; selenocysteinyl-tRNA(Sec) biosynthesis; L-seryl-tRNA(Sec) from L-serine and tRNA(Sec): step 1/1. In terms of biological role, catalyzes the attachment of serine to tRNA(Ser). Is also able to aminoacylate tRNA(Sec) with serine, to form the misacylated tRNA L-seryl-tRNA(Sec), which will be further converted into selenocysteinyl-tRNA(Sec). This is Serine--tRNA ligase from Vibrio campbellii (strain ATCC BAA-1116).